The following is a 507-amino-acid chain: Histidine ammonia-lyase (507 aa).

Positions alanine 141–glycine 143 form a cross-link, 5-imidazolinone (Ala-Gly). Position 142 is a 2,3-didehydroalanine (Ser) (serine 142).

This sequence belongs to the PAL/histidase family. Post-translationally, contains an active site 4-methylidene-imidazol-5-one (MIO), which is formed autocatalytically by cyclization and dehydration of residues Ala-Ser-Gly.

The protein localises to the cytoplasm. The catalysed reaction is L-histidine = trans-urocanate + NH4(+). Its pathway is amino-acid degradation; L-histidine degradation into L-glutamate; N-formimidoyl-L-glutamate from L-histidine: step 1/3. This is Histidine ammonia-lyase from Burkholderia ambifaria (strain MC40-6).